A 253-amino-acid chain; its full sequence is MNIYDILDKVFTMMYDGQDLTDYFLVQEVRGRSVYSIEMGKRTIAGVDGGVITTESLPARELEVDAIVFGDGTETDLRRRIEYLNFLLHRDTDVPITFSDEPSRTYYGRYEFATEGDEKGGFHKVTLNFYCQDPLKYGPEVTTDVTTASTPVKNTGLAVTNPTIRCVFSTSATEYEMQLLDGSTVVKFLKVKYGFNTGDTLVIDCHERSVTLNGQDIMPALLIQSDWIQLKPQVNTYLKATQPSTIVFTEKFL.

In terms of assembly, homohexamer.

The protein localises to the virion. In terms of biological role, forms a 40 Angstroms wide channel at the distal tip of the tail. Remains associated to the tail after DNA ejection. The polypeptide is Distal tail protein (Bacillus phage SPP1 (Bacteriophage SPP1)).